Reading from the N-terminus, the 130-residue chain is Secreted RxLR effector protein 68 (130 aa).

A signal peptide spans 1 to 29 (MRCVCASIRRTRIIEFLMFFALSSSTASC). Asn-36 is a glycosylation site (N-linked (GlcNAc...) asparagine). The RxLR signature appears at 45–48 (RWLR).

It belongs to the RxLR effector family.

It is found in the secreted. It localises to the host cytoplasm. Its subcellular location is the host nucleus. Functionally, effector that acts as a broad suppressor of cell death to interrupt plant immunity. Inhibits cell death induced by cell death-inducing proteins, including the PAMP elicitor INF1 from P.infestans. The polypeptide is Secreted RxLR effector protein 68 (Plasmopara viticola (Downy mildew of grapevine)).